We begin with the raw amino-acid sequence, 227 residues long: MKKRFSLIMMTGLLFGLTSPAFAAEKTETEAKAPANVAVLLDASGSMAKRIDGVSKFNSAKKEISKFASSLPEGTQVKMSVFGSEGNNKNSGKVQSCEAIRNVYGFQSFNEQSFLNSLNTIGPTGWTPIAKALNEAKSSFDQLDAKGEKVVYLLTDGEETCGGNPIKTAKELQKDNITVNVIGFDYKEGYKGQLNAIAKVGGGEYFPAYTQKDVEKIFTQQSLMLSK.

The N-terminal stretch at 1–23 is a signal peptide; sequence MKKRFSLIMMTGLLFGLTSPAFA. Positions 36–227 constitute a VWFA domain; it reads NVAVLLDASG…FTQQSLMLSK (192 aa).

To B.subtilis YwmD.

This is an uncharacterized protein from Bacillus subtilis (strain 168).